A 974-amino-acid chain; its full sequence is Translation initiation factor IF-2 (974 aa).

The segment at Phe-31–Pro-376 is disordered. A compositionally biased stretch (low complexity) spans Pro-52 to Gly-68. Over residues Gly-83–Ala-96 the composition is skewed to pro residues. Residues Ala-97 to Lys-133 are compositionally biased toward low complexity. Residues Pro-134–Pro-147 show a composition bias toward pro residues. 2 stretches are compositionally biased toward low complexity: residues Ala-148–Ala-166 and Arg-179–Glu-191. 2 stretches are compositionally biased toward pro residues: residues Pro-195–Ala-210 and Arg-253–Gly-266. The segment covering Ala-267–Pro-277 has biased composition (low complexity). Residues Gly-279–Gly-332 are compositionally biased toward gly residues. The span at Arg-349–Lys-358 shows a compositional bias: basic residues. The tr-type G domain occupies Ser-470–Leu-641. Positions Gly-479–Thr-486 are G1. Gly-479–Thr-486 provides a ligand contact to GTP. A G2 region spans residues Gly-504–His-508. The tract at residues Asp-529–Gly-532 is G3. Residues Asp-529–His-533 and Asn-583–Asp-586 contribute to the GTP site. Residues Asn-583–Asp-586 are G4. The tract at residues Ser-619 to Lys-621 is G5.

Belongs to the TRAFAC class translation factor GTPase superfamily. Classic translation factor GTPase family. IF-2 subfamily.

The protein resides in the cytoplasm. Its function is as follows. One of the essential components for the initiation of protein synthesis. Protects formylmethionyl-tRNA from spontaneous hydrolysis and promotes its binding to the 30S ribosomal subunits. Also involved in the hydrolysis of GTP during the formation of the 70S ribosomal complex. In Rhodococcus opacus (strain B4), this protein is Translation initiation factor IF-2.